We begin with the raw amino-acid sequence, 160 residues long: Putative NrdI-like protein (160 aa).

It belongs to the NrdI family.

This Streptococcus pyogenes serotype M6 (strain ATCC BAA-946 / MGAS10394) protein is Putative NrdI-like protein.